We begin with the raw amino-acid sequence, 600 residues long: MNSLVRRKQVDSVHLIKNDGPHQLAKKLSAVDLVAIGVGTTIGAGVYILVGTVAREHTGPALAVSFFIAGVAAALSACCYAELASRCPSAGSAYHYAYICLGEGIAWLVGWALVLDYTIGGSAIARGITPNLASFFGGLDNLPVFLARQTIPGVGIVVDPCAALLIMIVTILLCFGIKESSTVQAIVTSVNVCTLVFIIVVGGYLACKTGWVGYDLPSGYFPFGLNGILAGSAVVFFSYIGFDTVTSTAEEVKNPQRDLPLGIGIALLICCILYMLLSVVIVGLVPYYSLNPDTPISSAFGDSGMQWAAYILTTGAITALCASLLGSLLAQPRIFMAMARDGLLPAFFSEISPRTQVPVKSTIAIGVLAAALAFFMDVAQLSEMVSVGTLMAFTAVAVCVLVLRYVPPDGVPLSSSSQTLSDTDESRAETENFLVDAIESSDSPLLGNETARDEKYFGKRRKIAAWSIALVCIGVLGLASAASAERLPSFPRFTICGVSAVILLGSLITLGYIDEDEERHNFGHKGGFLCPFVPYLPVLCILINTYLIINIGAGTWIRVLIWLLIGSMIYIFYGRSHSLLNNAVYVPTMTCTRKTTDHLA.

The Cytoplasmic segment spans residues 1–32 (MNSLVRRKQVDSVHLIKNDGPHQLAKKLSAVD). A helical transmembrane segment spans residues 33-53 (LVAIGVGTTIGAGVYILVGTV). At 54-60 (AREHTGP) the chain is on the vacuolar side. The helical transmembrane segment at 61-81 (ALAVSFFIAGVAAALSACCYA) threads the bilayer. Residues 82–92 (ELASRCPSAGS) lie on the Cytoplasmic side of the membrane. Residues 93–115 (AYHYAYICLGEGIAWLVGWALVL) traverse the membrane as a helical segment. Over 116–152 (DYTIGGSAIARGITPNLASFFGGLDNLPVFLARQTIP) the chain is Vacuolar. Residues 153–173 (GVGIVVDPCAALLIMIVTILL) form a helical membrane-spanning segment. Over 174-184 (CFGIKESSTVQ) the chain is Cytoplasmic. Residues 185–205 (AIVTSVNVCTLVFIIVVGGYL) traverse the membrane as a helical segment. Topologically, residues 206 to 220 (ACKTGWVGYDLPSGY) are vacuolar. Residues 221–241 (FPFGLNGILAGSAVVFFSYIG) traverse the membrane as a helical segment. The Cytoplasmic segment spans residues 242-264 (FDTVTSTAEEVKNPQRDLPLGIG). A helical membrane pass occupies residues 265-285 (IALLICCILYMLLSVVIVGLV). Residues 286–308 (PYYSLNPDTPISSAFGDSGMQWA) are Vacuolar-facing. The chain crosses the membrane as a helical span at residues 309 to 329 (AYILTTGAITALCASLLGSLL). Topologically, residues 330–360 (AQPRIFMAMARDGLLPAFFSEISPRTQVPVK) are cytoplasmic. The helical transmembrane segment at 361–381 (STIAIGVLAAALAFFMDVAQL) threads the bilayer. S382 is a topological domain (vacuolar). Residues 383–403 (EMVSVGTLMAFTAVAVCVLVL) traverse the membrane as a helical segment. The Cytoplasmic portion of the chain corresponds to 404-462 (RYVPPDGVPLSSSSQTLSDTDESRAETENFLVDAIESSDSPLLGNETARDEKYFGKRRK). Residues 463–483 (IAAWSIALVCIGVLGLASAAS) traverse the membrane as a helical segment. Residues 484-492 (AERLPSFPR) lie on the Vacuolar side of the membrane. The helical transmembrane segment at 493 to 513 (FTICGVSAVILLGSLITLGYI) threads the bilayer. Topologically, residues 514 to 528 (DEDEERHNFGHKGGF) are cytoplasmic. A helical transmembrane segment spans residues 529 to 549 (LCPFVPYLPVLCILINTYLII). A topological domain (vacuolar) is located at residue N550. A helical transmembrane segment spans residues 551 to 571 (IGAGTWIRVLIWLLIGSMIYI). Over 572–600 (FYGRSHSLLNNAVYVPTMTCTRKTTDHLA) the chain is Cytoplasmic.

It belongs to the amino acid-polyamine-organocation (APC) superfamily. Cationic amino acid transporter (CAT) (TC 2.A.3.3) family. As to expression, expressed in roots, stems, flowers, and leaves.

The protein localises to the vacuole membrane. In terms of biological role, permease involved in the transport of the cationic amino acids. The chain is Cationic amino acid transporter 4, vacuolar (CAT4) from Arabidopsis thaliana (Mouse-ear cress).